The following is a 242-amino-acid chain: 2-C-methyl-D-erythritol 4-phosphate cytidylyltransferase (242 aa).

Belongs to the IspD/TarI cytidylyltransferase family. IspD subfamily.

The catalysed reaction is 2-C-methyl-D-erythritol 4-phosphate + CTP + H(+) = 4-CDP-2-C-methyl-D-erythritol + diphosphate. It participates in isoprenoid biosynthesis; isopentenyl diphosphate biosynthesis via DXP pathway; isopentenyl diphosphate from 1-deoxy-D-xylulose 5-phosphate: step 2/6. Functionally, catalyzes the formation of 4-diphosphocytidyl-2-C-methyl-D-erythritol from CTP and 2-C-methyl-D-erythritol 4-phosphate (MEP). The chain is 2-C-methyl-D-erythritol 4-phosphate cytidylyltransferase from Shewanella loihica (strain ATCC BAA-1088 / PV-4).